A 79-amino-acid chain; its full sequence is Conotoxin VnMSGL-0122 (79 aa).

A signal peptide spans M1–S20. A propeptide spanning residues H21–T44 is cleaved from the precursor. Intrachain disulfides connect C52-C64, C56-C73, and C63-C77. The residue at position 78 (L78) is a Leucine amide.

Belongs to the conotoxin O3 superfamily. In terms of tissue distribution, expressed by the venom duct.

Its subcellular location is the secreted. The polypeptide is Conotoxin VnMSGL-0122 (Conus ventricosus (Mediterranean cone)).